The chain runs to 149 residues: Large ribosomal subunit protein uL15 (149 aa).

Residues 1 to 54 form a disordered region; that stretch reads MSLKLHNLKPTPNSRPEKHRKGRGHAAGKGKQAGKGQSGQNKRKGHRLGFEGGQ. A compositionally biased stretch (basic residues) spans 17–28; that stretch reads EKHRKGRGHAAG.

Belongs to the universal ribosomal protein uL15 family. In terms of assembly, part of the 50S ribosomal subunit.

Its function is as follows. Binds to the 23S rRNA. In Mycoplasmopsis synoviae (strain 53) (Mycoplasma synoviae), this protein is Large ribosomal subunit protein uL15.